Reading from the N-terminus, the 426-residue chain is Serine--tRNA ligase (426 aa).

An L-serine-binding site is contributed by 233 to 235 (TSE). Residue 264–266 (RAE) coordinates ATP. Residue Glu-287 coordinates L-serine. 351–354 (EISS) is a binding site for ATP. Residue Ser-387 coordinates L-serine.

It belongs to the class-II aminoacyl-tRNA synthetase family. Type-1 seryl-tRNA synthetase subfamily. As to quaternary structure, homodimer. The tRNA molecule binds across the dimer.

The protein localises to the cytoplasm. It carries out the reaction tRNA(Ser) + L-serine + ATP = L-seryl-tRNA(Ser) + AMP + diphosphate + H(+). It catalyses the reaction tRNA(Sec) + L-serine + ATP = L-seryl-tRNA(Sec) + AMP + diphosphate + H(+). It participates in aminoacyl-tRNA biosynthesis; selenocysteinyl-tRNA(Sec) biosynthesis; L-seryl-tRNA(Sec) from L-serine and tRNA(Sec): step 1/1. Functionally, catalyzes the attachment of serine to tRNA(Ser). Is also able to aminoacylate tRNA(Sec) with serine, to form the misacylated tRNA L-seryl-tRNA(Sec), which will be further converted into selenocysteinyl-tRNA(Sec). This is Serine--tRNA ligase from Xanthomonas euvesicatoria pv. vesicatoria (strain 85-10) (Xanthomonas campestris pv. vesicatoria).